Here is a 457-residue protein sequence, read N- to C-terminus: Metacaspase-1 (457 aa).

The disordered stretch occupies residues 1 to 149 (MSWNQYPGGG…PQLQGQGGQS (149 aa)). Residues 7 to 18 (PGGGHHQQGGYG) are compositionally biased toward gly residues. Over residues 20–56 (RPPPPQWAQQGPPPPPNMGYRPPPPPQAYYNNPPPPQ) the composition is skewed to pro residues. The segment covering 57 to 83 (QYQRPAPQQNGYQQGGYQQQQQSQGNY) has biased composition (low complexity). Active-site residues include His247 and Cys303.

Belongs to the peptidase C14B family.

In terms of biological role, involved in cell death (apoptosis). This Cryptococcus neoformans var. neoformans serotype D (strain JEC21 / ATCC MYA-565) (Filobasidiella neoformans) protein is Metacaspase-1 (MCA1).